Reading from the N-terminus, the 513-residue chain is Bifunctional purine biosynthesis protein PurH (513 aa).

Residues Met-1–Val-145 form the MGS-like domain.

It belongs to the PurH family.

The catalysed reaction is (6R)-10-formyltetrahydrofolate + 5-amino-1-(5-phospho-beta-D-ribosyl)imidazole-4-carboxamide = 5-formamido-1-(5-phospho-D-ribosyl)imidazole-4-carboxamide + (6S)-5,6,7,8-tetrahydrofolate. It catalyses the reaction IMP + H2O = 5-formamido-1-(5-phospho-D-ribosyl)imidazole-4-carboxamide. It participates in purine metabolism; IMP biosynthesis via de novo pathway; 5-formamido-1-(5-phospho-D-ribosyl)imidazole-4-carboxamide from 5-amino-1-(5-phospho-D-ribosyl)imidazole-4-carboxamide (10-formyl THF route): step 1/1. It functions in the pathway purine metabolism; IMP biosynthesis via de novo pathway; IMP from 5-formamido-1-(5-phospho-D-ribosyl)imidazole-4-carboxamide: step 1/1. The polypeptide is Bifunctional purine biosynthesis protein PurH (Enterococcus faecalis (strain ATCC 700802 / V583)).